A 63-amino-acid polypeptide reads, in one-letter code: Large ribosomal subunit protein uL30 (63 aa).

Belongs to the universal ribosomal protein uL30 family. In terms of assembly, part of the 50S ribosomal subunit.

This Granulibacter bethesdensis (strain ATCC BAA-1260 / CGDNIH1) protein is Large ribosomal subunit protein uL30.